A 484-amino-acid polypeptide reads, in one-letter code: UDP-N-acetylmuramate--L-alanine ligase (484 aa).

ATP is bound at residue 124 to 130; it reads GTHGKTT.

Belongs to the MurCDEF family.

The protein resides in the cytoplasm. It carries out the reaction UDP-N-acetyl-alpha-D-muramate + L-alanine + ATP = UDP-N-acetyl-alpha-D-muramoyl-L-alanine + ADP + phosphate + H(+). The protein operates within cell wall biogenesis; peptidoglycan biosynthesis. In terms of biological role, cell wall formation. This is UDP-N-acetylmuramate--L-alanine ligase from Pseudoalteromonas atlantica (strain T6c / ATCC BAA-1087).